A 170-amino-acid chain; its full sequence is Ribosome maturation factor RimP (170 aa).

Belongs to the RimP family.

The protein localises to the cytoplasm. In terms of biological role, required for maturation of 30S ribosomal subunits. This Acidothermus cellulolyticus (strain ATCC 43068 / DSM 8971 / 11B) protein is Ribosome maturation factor RimP.